The primary structure comprises 383 residues: Acetylornithine deacetylase (383 aa).

His80 contacts Zn(2+). Asp82 is a catalytic residue. Asp112 is a binding site for Zn(2+). Glu144 is an active-site residue. 3 residues coordinate Zn(2+): Glu145, Glu169, and His355.

It belongs to the peptidase M20A family. ArgE subfamily. In terms of assembly, homodimer. Zn(2+) serves as cofactor. Co(2+) is required as a cofactor. Requires glutathione as cofactor.

The protein resides in the cytoplasm. It catalyses the reaction N(2)-acetyl-L-ornithine + H2O = L-ornithine + acetate. The protein operates within amino-acid biosynthesis; L-arginine biosynthesis; L-ornithine from N(2)-acetyl-L-ornithine (linear): step 1/1. Functionally, catalyzes the hydrolysis of the amide bond of N(2)-acetylated L-amino acids. Cleaves the acetyl group from N-acetyl-L-ornithine to form L-ornithine, an intermediate in L-arginine biosynthesis pathway, and a branchpoint in the synthesis of polyamines. The chain is Acetylornithine deacetylase from Salmonella typhi.